A 323-amino-acid chain; its full sequence is tRNA U34 carboxymethyltransferase (323 aa).

Carboxy-S-adenosyl-L-methionine-binding positions include Lys91, Trp105, Lys110, Gly130, Ile180 to Glu181, Met196, Tyr200, and Arg315.

The protein belongs to the class I-like SAM-binding methyltransferase superfamily. CmoB family. Homotetramer.

The catalysed reaction is carboxy-S-adenosyl-L-methionine + 5-hydroxyuridine(34) in tRNA = 5-carboxymethoxyuridine(34) in tRNA + S-adenosyl-L-homocysteine + H(+). Its function is as follows. Catalyzes carboxymethyl transfer from carboxy-S-adenosyl-L-methionine (Cx-SAM) to 5-hydroxyuridine (ho5U) to form 5-carboxymethoxyuridine (cmo5U) at position 34 in tRNAs. This is tRNA U34 carboxymethyltransferase from Geobacter sp. (strain M21).